Reading from the N-terminus, the 288-residue chain is Intermediate transcription factor 3 small subunit (288 aa).

The protein belongs to the orthopoxvirus OPG134 family. In terms of assembly, heterodimer of a 45 kDa (A23R) and a 32 kDa (A8R) subunit to form the virus intermediate transcription factor (VITF)-3.

Acts with RNA polymerase to initiate transcription from intermediate gene promoters. The protein is Intermediate transcription factor 3 small subunit (OPG134) of Homo sapiens (Human).